A 350-amino-acid chain; its full sequence is Small ribosomal subunit biogenesis GTPase RsgA (350 aa).

Over residues 1 to 17 the composition is skewed to polar residues; it reads MSKNKLSKGQQRRVNAN. The tract at residues 1–33 is disordered; sequence MSKNKLSKGQQRRVNANHQRRLKTSKEKPDYDD. Positions 104–273 constitute a CP-type G domain; it reads TSVLTRPDFY…VIDSPGVREF (170 aa). GTP contacts are provided by residues 160-163 and 214-222; these read NKID and GQSGVGKSS. Zn(2+) is bound by residues Cys297, Cys302, His304, and Cys310.

The protein belongs to the TRAFAC class YlqF/YawG GTPase family. RsgA subfamily. In terms of assembly, monomer. Associates with 30S ribosomal subunit, binds 16S rRNA. Requires Zn(2+) as cofactor.

It is found in the cytoplasm. One of several proteins that assist in the late maturation steps of the functional core of the 30S ribosomal subunit. Helps release RbfA from mature subunits. May play a role in the assembly of ribosomal proteins into the subunit. Circularly permuted GTPase that catalyzes slow GTP hydrolysis, GTPase activity is stimulated by the 30S ribosomal subunit. The polypeptide is Small ribosomal subunit biogenesis GTPase RsgA (Shigella boydii serotype 18 (strain CDC 3083-94 / BS512)).